Here is a 254-residue protein sequence, read N- to C-terminus: Probable phosphatase Sbal_1472 (254 aa).

Zn(2+) contacts are provided by H8, H10, H16, H41, E74, H102, H132, D193, and H195.

It belongs to the PHP family. It depends on Zn(2+) as a cofactor.

The chain is Probable phosphatase Sbal_1472 from Shewanella baltica (strain OS155 / ATCC BAA-1091).